The sequence spans 3704 residues: MDASRLSRSSSTSFTSVLSPFEPASVAVSAHGSPPSSASPGPDDKAFSVDGTQTPPHQLGVVLITSPFNSEVTVSLSVPIRDFLDRHNLVQVRDEFVNHLRSLLASSPGQEPAIDSVALLVHLLLYLAENLSSAEHRPRHARLSLLEAAWASFHSENLDSVDVHTFARSLSPEKASLVLRAHFEAYAALQQSGISVAIRVPALLQSVQKRQAGLYALFGGQGNNHGYFSELQTLFDTYRPLVEPIVAAATARFSHLLSRIDAARSGPYAFHSQGLDVLAWLQRRTDRPTEAYLASVPISGPLLSLTQLIQFYVAAKSSGMTVPQFRSHFEAVSGHSQGIVSATAMAMAIDDEHYIECVAMAAEFLFQIGSVSQLCYGDRTVSDETSMESVEAGFGPPSSMLVISAPSRAFIEVRVALFNTIVPEHRRIHAALINAPTTAVLAGHASDLVSFARDVSAISAPAKLDQARIPFSKRKPSLRLKFLPISLPYHSPLLADVTLSQVLAPIDAQKWQAHPLALPVHSTTDGANMQQLPSSSILDSLRVQMCTAPVDWIQAVQPSATITHFVDFGTGGASGIGNITARNLSGRGFKVLTVSGTHKESAEFYRLDPTPNAQPWGSKFQPRLLRTPQGKVILDTPMSRLLGKPPIMVAGMTPTTVQASLNAATIQAGYHIELAGGGLHDESKLRSRVQEILAKAPAASGLTLNSLYINPRQWSFQLPAWLQLSREGAPIDGLCVAAGIPSPDKAQELLTSLKQAGLRHVSFKPGSLDGIKQVCKIAQQNPGFPILLQWTGGRAGGHHSAEDFHDPIIHSYEIIRSCPNLVLVAGSGFTSADSFWPYLSGQWSVKRGLPPMPFDGVLFGSWAMTAKEAATSLPVKQLIASTQGCSDKDWQKTYDAPIGGIMTVLSEMGELVHQVANRATLLWSELDRDLFKLSKDKQLVYLAKNKERLVQRLNDDFQRVWFARDGQGKILYDVQDMTYADVADRMLSLMFIAAQARWIDLGYRNLLGDWCRRIEERFSKASKTYQLQSYAQFDRSPELELHRLLDHYPDCKTTLLTSEDVEYFHTMCWRRGQKPPPFITRLGEDFGHQFKKDSLWQSEDLDAVVDADPQRVCILHGPVAASDTAPVDQPIAEMLGSVEKGLVQHVLDHFYKGDLNNVPVAEYLDATATGSPAVRTSPIRTVCSRIKIDSGEHVAVFSVNSSAVKNPVAFLDSVVGEQPSWIRALVHSSRVSLGRQLRSNPLQRLLALREGQLFQIHTSVDGHNVKRLQVYGCHRSYGEQSNDFLAVDIVRRSDTKTSSGADIDVFIYEQRGSEAIPLLLQFEYTPSTSCALIREVEHGRNDRIRRFYWKMWFGEDMPADAQLDRVSSFTTEPRPVSSAQIPDGGAIAVDPTISAGWEAIMKTVVSSCDADLLSLVHLGHEFQTIGGALPVASGDICSVRSYASSITNSETGKILTVKATISRVEAAGSDAVPVVQVTSRFFYKGKYADHHRCFTETDFAFLLVLQDEAAVQVFKSKDWLELDQGVHEVKVGTELILRGTTVVPRYKNAKEMLDLRVQGAVFVRQGVEENQIGLIEFDADAPLSSDPIVAYLERHGTRLQNANEYSTVPISNAYKLAEGVLTTPKTNEPYSRASLDFNPIHINPYFANLAELPATIGHGMSTFAECQKWMDEAMKSTEPHNKTTVPSCTAFKADFTAMVVPGDQLSVQLRHKAMSDGQKVVQIDASNQRGELVLQGTARYQQPRSVYVFTGQGSQAKVMGMELYRQSATARAIWDEAEQHLAQSLGLSILEIVRENPKTKTVYFGGAQGQSIRRNYMALQHETIDEQGRSIRTPIFPSIHANSRSYTFESPKGLLFATQFTQIALVLFELAYFRHLQKEGIIVEDAVFAGHSLGEYAALASVAGMMRLRDLVDVVFYRGLTMQSAVPRINGRSDYGMVAVAPIKAFPKINDVDAALAQVVDRVSQASGQLLQTVNYNVRRQQSVVAGHEVALAALSRVLDKCGSKALSVANEAELVAEVTSAVEAAQSTAKTSGIELKRGIATIPLAGIDVPFHSKFLSNGIDPFRRFLDSRLDIETVRPEALVGRYIPNLVARIFTLERAYIEHVSEVTRSEVLANILANWDEALLDRRRLTRTLVIELLAYQFASPVLWSQTQTLLFQDASFERLIEFGPTPTLVGMASKTLAADFSEKDRKLGLKRTLLCVGKNDADILYSFEAEEEVNPTDSPKATPEPAVSKAALAAAATPAVAAATTAVAQVAAPALDDERLDPLLTVRSILAQKQKVKIADIPPSKSIKQLTGGRSTLQNELVGDLGAEFVELPERAEELTLEELAAALRPGYSGELGKYTNGLIARLSASKLPGSFGLTALKAHLTARYGFQSGRISAILLYTLTEEPAKRLTGDAEAISWIDGVAAVYAKDTSITLPAPGGAAGGAGATAGATALVSSKELVALQSKMQALSEKQIQVLTEHLGLDADASLSQLAKLSTESASLHKALDSVSAEHGDAYIKGIQGIFSAAKARTFKSFWNWSRQNLEELFADILQDRVSDDSTLLARIIQVWNQLDDVGILEQQLDQLQRSGVAGSDRVTSLFDPLLRQAKSGALKTAPRFIDVSVPLRPSTRLDSRGNIVYQQVPRDGMETILDYVTSMTSDKESKASAGQASSKSLIGRLEDLAQILSRLDEDQTSDVSIGSRPALWACKKVNSTWSRDDDLTEIYFRGLAKLAERGSSYAGLDVLLTGVGQGSIAFEVMRRFLRGGARVIVTTSTFSPKKLRMYGDTYRHDGARGAQLIVLPFNQGSFKDTQALVDHVYTSMGIDIDVLVPFAAISENGRNIDGIDDKSELAHRIMLTNVIRLMGCIKSAKAQRGILHRPTQVILPLSFNHGVLGGDGLYGPSKIGLETLLNTFESEDWSRYLSVAGARIGMCRGTDLMASSDIVAESLERHFGFRTFSTGEMAFNLLGLVEPEFASVNQTQPILLDLTGRASSLASPGKAMRDAHQEWQRKSDIKKALLSENRHDFKTTSSTRVTEDHYRRVEIEPRSLHHFAYPELNSQQVCDQIAKGTCHLDLDQVIVISGFAEVGPWGSSRTRWEREVSETWSLEGLVEMAWLTGHIKHFNGRLADGRSYIGWVDTKTGEPVADAQMRARYARQVEQHAGIRLVEPELMHGFDPERKVIQQEIELTHDLGPLEISAGEAERFRLAHGDKAIVWQDEETKSWYLRLKKGASVFLPKASRFDRHVAAQMPTGWDPARYGIPSDIVSQTDETALYALVCIAEALVQSGIDDPYELYKHVHVSEVGTSLGSAMGGLRSLAKMFKDRRQDVEVQKDILQETFINTVAGWTNLLLLSSCGPIKPTVGACATALQSLDVAAETIRCGKAKIMIAGGYESISEESMTEFANMKATASSDEAFAAGLAPEELSKPMTSGRSGFVEAQGCGVQIVMSAATAIRIGAPINGIVAYTQTATDRQGRSIPAPGKGVLAATVPLQRAMSGWGLDGNDVGVISMHGTSTKANDKNESNVYHTMLGKLGRAEGRAVPAMAQKWLCGHGKGGAAAWAINGLMQSINDGIVAGNRNADDISEELRAYNRIVYPSRSIRYSRERLHAGLVTSFGFGQVGGIAMILHASHLFGRLDREAFELYKARRNKRQQITYRRMHSLFIKGDLVRIKEDAPYSPEDETAVLLDIDARAELSSEGSYRIVPSIYA.

Low complexity predominate over residues 27–41; it reads AVSAHGSPPSSASPG. The disordered stretch occupies residues 27–52; the sequence is AVSAHGSPPSSASPGPDDKAFSVDGT. Residues 216–475 are acetyltransferase (AT) domain; that stretch reads ALFGGQGNNH…QARIPFSKRK (260 aa). An enoyl reductase (ER) domain region spans residues 639–887; sequence SRLLGKPPIM…LIASTQGCSD (249 aa). A dehydratase (DH) domain region spans residues 1216–1709; the sequence is GEQPSWIRAL…VPGDQLSVQL (494 aa). In terms of domain architecture, MaoC-like spans 1624 to 1730; it reads PKTNEPYSRA…VQIDASNQRG (107 aa). The tract at residues 1747-2112 is malonyl/palmitoyl transferase (MT/PT) domain; it reads YVFTGQGSQA…IEHVSEVTRS (366 aa). The Carrier domain maps to 2265–2343; sequence DERLDPLLTV…AALRPGYSGE (79 aa). O-(pantetheine 4'-phosphoryl)serine is present on S2303. The segment at 2733-2969 is ketoreductase (KR) domain; it reads GLDVLLTGVG…LGLVEPEFAS (237 aa). In terms of domain architecture, Ketosynthase family 3 (KS3) spans 3176–3623; that stretch reads QQEIELTHDL…QVGGIAMILH (448 aa). Active-site for beta-ketoacyl synthase activity residues include C3359, H3506, and H3547.

It in the N-terminal section; belongs to the fungal fatty acid synthetase subunit beta family. The protein in the C-terminal section; belongs to the thiolase-like superfamily. Fungal fatty acid synthetase subunit alpha family.

It functions in the pathway secondary metabolite biosynthesis. Functionally, fatty acid synthase; part of the gene cluster that mediates the biosynthesis of the glycolipid biosurfactant ustilagic acid (UA). UA is a secreted cellobiose glycolipid that is toxic for many microorganisms and confers biocontrol activity to U.maydis. UA consists of 15,16-dihydroxypalmitic or 2,15,16-trihydroxypalmitic acid, which is O-glycosidically linked to cellobiose at its terminal hydroxyl group. In addition, the cellobiose moiety is acetylated and acylated with a short-chain hydroxy fatty acid. UA biosynthesis starts with omega-hydroxylation of palmitic acid catalyzed by the cytochrome P450 monooxygenase cyp1. Terminal hydroxylation of palmitic acid precedes subterminal hydroxylation catalyzed by the cytochrome P450 monooxygenase cyp2. Sequential glucosylation of the hydroxy fatty acid is probably catalyzed by the glycosyltransferase ugt1. The cellobiose lipid is further decorated by acetylation of the proximal glucose residue and by acylation with a short-chain beta-hydroxy fatty acid at the distal glucose residue. The acyltransferase uat1 may be a good candidate for catalyzing either acetylation or acylation of the cellobiose lipid. The fatty acid synthase fas2 may be involved in synthesis of the carbon backbone of the short-chain beta-hydroxy fatty acid esterified to the cellobiose disaccharide. The secreted UA consists of a mixture of both alpha-hydroxylated and non-hydroxylated glycolipids; therefore, alpha-hydroxylation of the long-chain fatty, catalyzed by the fatty acid hydroxylase ahd1, occurs late in UA biosynthesis and may be the last step before secretion. The chain is Fatty acid synthase 2 from Mycosarcoma maydis (Corn smut fungus).